Reading from the N-terminus, the 68-residue chain is DNA-directed RNA polymerase subunit omega (68 aa).

This sequence belongs to the RNA polymerase subunit omega family. In terms of assembly, the RNAP catalytic core consists of 2 alpha, 1 beta, 1 beta' and 1 omega subunit. When a sigma factor is associated with the core the holoenzyme is formed, which can initiate transcription.

The catalysed reaction is RNA(n) + a ribonucleoside 5'-triphosphate = RNA(n+1) + diphosphate. Functionally, promotes RNA polymerase assembly. Latches the N- and C-terminal regions of the beta' subunit thereby facilitating its interaction with the beta and alpha subunits. The sequence is that of DNA-directed RNA polymerase subunit omega from Trichlorobacter lovleyi (strain ATCC BAA-1151 / DSM 17278 / SZ) (Geobacter lovleyi).